Here is a 142-residue protein sequence, read N- to C-terminus: Large ribosomal subunit protein uL11 (142 aa).

The interval 86-105 (LKSGSKEPGKQSAGQISRAK) is disordered.

It belongs to the universal ribosomal protein uL11 family. In terms of assembly, part of the ribosomal stalk of the 50S ribosomal subunit. Interacts with L10 and the large rRNA to form the base of the stalk. L10 forms an elongated spine to which L12 dimers bind in a sequential fashion forming a multimeric L10(L12)X complex. In terms of processing, one or more lysine residues are methylated.

Forms part of the ribosomal stalk which helps the ribosome interact with GTP-bound translation factors. The protein is Large ribosomal subunit protein uL11 of Chelativorans sp. (strain BNC1).